A 418-amino-acid polypeptide reads, in one-letter code: MRIAVLGLGYIGLPTAIMFASSGYDVVGYDIRSEVIKKINSGVAHIIEPEIDRRLKEVLSLGKLKVTDRVEDLKGSNVFIICVQTPLSGDDPDLSYLERAIRTVAEVMDRGALVIIESTIPPGTTEKMARLLENLTGLREGVDFYVAHAPERVMPGRIFKELVYNSRIIGGVSEKAANLAEKLYRSFVKGRIFLTNATTAEMVKLMENTFRDVNIALANEFALLAHQYGVNVYEAIELANTHPRVKIHTPGIGVGGHCLPKDPYLLLSNAKEDFGLIRIARRINERMPAFAAGLLFEALEKANIKPSEAIIAVLGLAYKGGTDDTRNSPALKFVEIIRNSVKEVRTYDPYVRGTHDSLEKVVEGADAIVIATDHPEFKSVNWESIGKSMRHKIIIDGRNIIKEPPVGFIFRGIGRGDV.

The NAD(+) site is built by Tyr10, Ile11, Asp30, Thr85, and Thr119. 9 residues coordinate UDP-N-acetyl-alpha-D-mannosaminouronate: Arg152, Val153, Lys204, Asn208, Arg211, His242, Arg244, Thr249, and Gly255. The active-site Proton donor/acceptor is the Lys204. Residue Cys258 is the Nucleophile of the active site. NAD(+) is bound at residue Lys261. Tyr318 and Lys319 together coordinate UDP-N-acetyl-alpha-D-mannosaminouronate. NAD(+) is bound at residue Arg326. Arg398 provides a ligand contact to UDP-N-acetyl-alpha-D-mannosaminouronate.

This sequence belongs to the UDP-glucose/GDP-mannose dehydrogenase family. As to quaternary structure, homodimer.

It carries out the reaction UDP-N-acetyl-alpha-D-mannosamine + 2 NAD(+) + H2O = UDP-N-acetyl-alpha-D-mannosaminouronate + 2 NADH + 3 H(+). Catalyzes the four-electron oxidation of UDP-N-acetyl-D-mannosamine (UDP-ManNAc), reducing NAD(+) and releasing UDP-N-acetylmannosaminuronic acid (UDP-ManNAcA). The polypeptide is UDP-N-acetyl-D-mannosamine dehydrogenase (Pyrococcus horikoshii (strain ATCC 700860 / DSM 12428 / JCM 9974 / NBRC 100139 / OT-3)).